We begin with the raw amino-acid sequence, 112 residues long: UPF0342 protein SPH_1504 (112 aa).

It belongs to the UPF0342 family.

This is UPF0342 protein SPH_1504 from Streptococcus pneumoniae (strain Hungary19A-6).